Reading from the N-terminus, the 387-residue chain is Bifunctional chorismate mutase/prephenate dehydratase (387 aa).

The Chorismate mutase domain maps to 1–92; the sequence is MNPDNPLLAL…DSVLTQQALL (92 aa). Positions 11, 28, 39, 48, 52, 84, and 88 each coordinate substrate. The region spanning 105 to 285 is the Prephenate dehydratase domain; that stretch reads RIAFLGPKGS…NHTRFIVLAR (181 aa). One can recognise an ACT domain in the interval 299–376; the sequence is TLIMATGQQA…RSLKVLGCYP (78 aa).

It is found in the cytoplasm. It catalyses the reaction chorismate = prephenate. The enzyme catalyses prephenate + H(+) = 3-phenylpyruvate + CO2 + H2O. The protein operates within amino-acid biosynthesis; L-phenylalanine biosynthesis; phenylpyruvate from prephenate: step 1/1. It participates in metabolic intermediate biosynthesis; prephenate biosynthesis; prephenate from chorismate: step 1/1. Functionally, catalyzes the Claisen rearrangement of chorismate to prephenate and the decarboxylation/dehydration of prephenate to phenylpyruvate. This Enterobacter agglomerans (Erwinia herbicola) protein is Bifunctional chorismate mutase/prephenate dehydratase (pheA).